A 301-amino-acid chain; its full sequence is Glycosyltransferase GlyG (301 aa).

It belongs to the glycosyltransferase 2 family.

The protein operates within protein modification; protein glycosylation. In terms of biological role, involved in the polymorphic O-glycosylation of the serine-rich repeat protein PsrP. Catalyzes the third step in glycosylation PsrP in this bacteria. Transfers glucose from UDP-glucose to the terminal glucose moiety of already-glycosylated PsrP (using truncated substrates with PsrP SSR1-GlcNAc-Glc). Has a marked preference for PsrP substrate that has already been modified by GlcNAc and glucose. In vitro has hydrolytic activity against UDP-glucose and to a lesser extent against UDP-galactose. Its function is as follows. Also catalyzes the fourth step in glycosylation of the serine-rich repeat protein PsrP in this bacteria. Can transfer the sugar from UDP-glucose (and much less well from UDP-galactose) to the terminal sugar moiety of PsrP-GlcNAc-Glc-Gal or of PsrP-GlcNAc-Glc-Glc. This Streptococcus pneumoniae serotype 4 (strain ATCC BAA-334 / TIGR4) protein is Glycosyltransferase GlyG.